Reading from the N-terminus, the 402-residue chain is Deacetylase Oant_2987 (402 aa).

6 residues coordinate Zn(2+): histidine 70, histidine 72, lysine 168, histidine 201, histidine 224, and aspartate 284. An N6-carboxylysine modification is found at lysine 168.

This sequence belongs to the metallo-dependent hydrolases superfamily. Atu3266/EF_0837 deacetylase family. Requires Zn(2+) as cofactor.

In terms of biological role, esterase that catalyzes the deacetylation of acetyl-(R)-mandelate (in vitro). Can also hydrolyze acetyl glycolate, but with lower efficiency. Has very low N-acetyl-D-amino acid deacetylase activity with N-acetyl-D-serine and N-acetyl-D-threonine (in vitro). Theoretical substrate docking studies suggest that other N-acetylated amino acids may optimally occupy the active site and may in fact be the physiological substrates. This is Deacetylase Oant_2987 from Brucella anthropi (strain ATCC 49188 / DSM 6882 / CCUG 24695 / JCM 21032 / LMG 3331 / NBRC 15819 / NCTC 12168 / Alc 37) (Ochrobactrum anthropi).